Consider the following 202-residue polypeptide: MKKIVIIDYNIGNLQSVQAAFLRLGQETVISRDLEEIRKADALILPGVGAFPTAMNNLKKFNLIELIQERAAAGIPILGICLGMQVLFEKGYEIEERQGLGLLKGEVIPIKTNEKIPHMGWNQLNLAKASPTTHYLSDNDEVYFVHSYQATCPDDELIAYTTYGEVKIPAIVGKNNVIGCQFHPEKSGEIGRKVLKAFLEEI.

One can recognise a Glutamine amidotransferase type-1 domain in the interval 3–202; sequence KIVIIDYNIG…KVLKAFLEEI (200 aa). Cysteine 81 functions as the Nucleophile in the catalytic mechanism. Catalysis depends on residues histidine 183 and glutamate 185.

In terms of assembly, heterodimer of HisH and HisF.

It localises to the cytoplasm. The catalysed reaction is 5-[(5-phospho-1-deoxy-D-ribulos-1-ylimino)methylamino]-1-(5-phospho-beta-D-ribosyl)imidazole-4-carboxamide + L-glutamine = D-erythro-1-(imidazol-4-yl)glycerol 3-phosphate + 5-amino-1-(5-phospho-beta-D-ribosyl)imidazole-4-carboxamide + L-glutamate + H(+). The enzyme catalyses L-glutamine + H2O = L-glutamate + NH4(+). Its pathway is amino-acid biosynthesis; L-histidine biosynthesis; L-histidine from 5-phospho-alpha-D-ribose 1-diphosphate: step 5/9. In terms of biological role, IGPS catalyzes the conversion of PRFAR and glutamine to IGP, AICAR and glutamate. The HisH subunit catalyzes the hydrolysis of glutamine to glutamate and ammonia as part of the synthesis of IGP and AICAR. The resulting ammonia molecule is channeled to the active site of HisF. This chain is Imidazole glycerol phosphate synthase subunit HisH (hisH), found in Lactococcus lactis subsp. lactis (strain IL1403) (Streptococcus lactis).